The chain runs to 66 residues: Large ribosomal subunit protein bL31 (66 aa).

Zn(2+)-binding residues include C16, C18, C36, and C39.

Belongs to the bacterial ribosomal protein bL31 family. Type A subfamily. As to quaternary structure, part of the 50S ribosomal subunit. Requires Zn(2+) as cofactor.

In terms of biological role, binds the 23S rRNA. The sequence is that of Large ribosomal subunit protein bL31 from Priestia megaterium (Bacillus megaterium).